The sequence spans 223 residues: Phosphoribosylformylglycinamidine synthase subunit PurQ (223 aa).

The Glutamine amidotransferase type-1 domain maps to 2–223 (KTAIIQLPGL…FQSALELAKG (222 aa)). Cys-86 (nucleophile) is an active-site residue. Active-site residues include His-196 and Glu-198.

In terms of assembly, part of the FGAM synthase complex composed of 1 PurL, 1 PurQ and 2 PurS subunits.

The protein localises to the cytoplasm. The catalysed reaction is N(2)-formyl-N(1)-(5-phospho-beta-D-ribosyl)glycinamide + L-glutamine + ATP + H2O = 2-formamido-N(1)-(5-O-phospho-beta-D-ribosyl)acetamidine + L-glutamate + ADP + phosphate + H(+). It carries out the reaction L-glutamine + H2O = L-glutamate + NH4(+). Its pathway is purine metabolism; IMP biosynthesis via de novo pathway; 5-amino-1-(5-phospho-D-ribosyl)imidazole from N(2)-formyl-N(1)-(5-phospho-D-ribosyl)glycinamide: step 1/2. Functionally, part of the phosphoribosylformylglycinamidine synthase complex involved in the purines biosynthetic pathway. Catalyzes the ATP-dependent conversion of formylglycinamide ribonucleotide (FGAR) and glutamine to yield formylglycinamidine ribonucleotide (FGAM) and glutamate. The FGAM synthase complex is composed of three subunits. PurQ produces an ammonia molecule by converting glutamine to glutamate. PurL transfers the ammonia molecule to FGAR to form FGAM in an ATP-dependent manner. PurS interacts with PurQ and PurL and is thought to assist in the transfer of the ammonia molecule from PurQ to PurL. The chain is Phosphoribosylformylglycinamidine synthase subunit PurQ from Bartonella henselae (strain ATCC 49882 / DSM 28221 / CCUG 30454 / Houston 1) (Rochalimaea henselae).